The primary structure comprises 276 residues: Diaminopimelate epimerase (276 aa).

Substrate is bound by residues Asn-13, Gln-46, and Asn-66. Catalysis depends on Cys-75, which acts as the Proton donor. Residues 76 to 77 (GN), Asn-159, Asn-192, and 210 to 211 (ER) each bind substrate. Cys-219 (proton acceptor) is an active-site residue. 220–221 (GT) contributes to the substrate binding site.

Belongs to the diaminopimelate epimerase family. In terms of assembly, homodimer.

It is found in the cytoplasm. It catalyses the reaction (2S,6S)-2,6-diaminopimelate = meso-2,6-diaminopimelate. Its pathway is amino-acid biosynthesis; L-lysine biosynthesis via DAP pathway; DL-2,6-diaminopimelate from LL-2,6-diaminopimelate: step 1/1. In terms of biological role, catalyzes the stereoinversion of LL-2,6-diaminopimelate (L,L-DAP) to meso-diaminopimelate (meso-DAP), a precursor of L-lysine and an essential component of the bacterial peptidoglycan. The protein is Diaminopimelate epimerase of Teredinibacter turnerae (strain ATCC 39867 / T7901).